We begin with the raw amino-acid sequence, 265 residues long: tRNA (guanine-N(7)-)-methyltransferase (265 aa).

Residues Met-1–Pro-40 form a disordered region. Residues Thr-19 to Ala-32 are compositionally biased toward low complexity. Glu-95, Glu-120, Asp-147, and Asp-170 together coordinate S-adenosyl-L-methionine. Residue Asp-170 is part of the active site. Substrate is bound by residues Lys-174, Asp-206, and Thr-241–Glu-244.

The protein belongs to the class I-like SAM-binding methyltransferase superfamily. TrmB family.

It catalyses the reaction guanosine(46) in tRNA + S-adenosyl-L-methionine = N(7)-methylguanosine(46) in tRNA + S-adenosyl-L-homocysteine. It participates in tRNA modification; N(7)-methylguanine-tRNA biosynthesis. Catalyzes the formation of N(7)-methylguanine at position 46 (m7G46) in tRNA. This is tRNA (guanine-N(7)-)-methyltransferase from Burkholderia pseudomallei (strain 1710b).